The following is a 319-amino-acid chain: Ornithine carbamoyltransferase (319 aa).

Carbamoyl phosphate is bound by residues 55–58, glutamine 82, arginine 106, and 133–136; these read STRT and HPCQ. Residues asparagine 171, aspartate 234, and 238-239 each bind L-ornithine; that span reads SM. Carbamoyl phosphate contacts are provided by residues 274–275 and arginine 302; that span reads CL.

Belongs to the aspartate/ornithine carbamoyltransferase superfamily. OTCase family.

It is found in the cytoplasm. It catalyses the reaction carbamoyl phosphate + L-ornithine = L-citrulline + phosphate + H(+). It functions in the pathway amino-acid biosynthesis; L-arginine biosynthesis; L-arginine from L-ornithine and carbamoyl phosphate: step 1/3. Functionally, reversibly catalyzes the transfer of the carbamoyl group from carbamoyl phosphate (CP) to the N(epsilon) atom of ornithine (ORN) to produce L-citrulline. This is Ornithine carbamoyltransferase from Corynebacterium diphtheriae (strain ATCC 700971 / NCTC 13129 / Biotype gravis).